The chain runs to 152 residues: Protein SprT-like (152 aa).

Residues 7–147 enclose the SprT-like domain; sequence QRLVEEVSLQ…CGKCKGKLKP (141 aa). Histidine 67 contacts Zn(2+). Glutamate 68 is an active-site residue. Histidine 71 contacts Zn(2+).

This sequence belongs to the SprT family. Zn(2+) serves as cofactor.

It is found in the cytoplasm. In Bacillus cereus (strain ATCC 14579 / DSM 31 / CCUG 7414 / JCM 2152 / NBRC 15305 / NCIMB 9373 / NCTC 2599 / NRRL B-3711), this protein is Protein SprT-like.